Consider the following 276-residue polypeptide: Phosphonoacetaldehyde hydrolase (276 aa).

The active-site Nucleophile is aspartate 19. Residues aspartate 19 and alanine 21 each contribute to the Mg(2+) site. The active-site Schiff-base intermediate with substrate is lysine 60. Residue aspartate 193 participates in Mg(2+) binding.

Belongs to the HAD-like hydrolase superfamily. PhnX family. In terms of assembly, homodimer. Requires Mg(2+) as cofactor.

The enzyme catalyses phosphonoacetaldehyde + H2O = acetaldehyde + phosphate + H(+). Functionally, involved in phosphonate degradation. This chain is Phosphonoacetaldehyde hydrolase, found in Bordetella bronchiseptica (strain ATCC BAA-588 / NCTC 13252 / RB50) (Alcaligenes bronchisepticus).